The following is a 437-amino-acid chain: CCA-adding enzyme (437 aa).

Positions 47 and 50 each coordinate ATP. The CTP site is built by S47 and R50. Positions 59, 61, and 110 each coordinate Mg(2+). ATP contacts are provided by H133, K152, and Y161. Residues H133, K152, and Y161 each coordinate CTP.

Belongs to the tRNA nucleotidyltransferase/poly(A) polymerase family. Archaeal CCA-adding enzyme subfamily. In terms of assembly, homodimer. Mg(2+) is required as a cofactor.

The catalysed reaction is a tRNA precursor + 2 CTP + ATP = a tRNA with a 3' CCA end + 3 diphosphate. It carries out the reaction a tRNA with a 3' CCA end + 2 CTP + ATP = a tRNA with a 3' CCACCA end + 3 diphosphate. In terms of biological role, catalyzes the addition and repair of the essential 3'-terminal CCA sequence in tRNAs without using a nucleic acid template. Adds these three nucleotides in the order of C, C, and A to the tRNA nucleotide-73, using CTP and ATP as substrates and producing inorganic pyrophosphate. tRNA 3'-terminal CCA addition is required both for tRNA processing and repair. Also involved in tRNA surveillance by mediating tandem CCA addition to generate a CCACCA at the 3' terminus of unstable tRNAs. While stable tRNAs receive only 3'-terminal CCA, unstable tRNAs are marked with CCACCA and rapidly degraded. The structural flexibility of RNA controls the choice between CCA versus CCACCA addition: following the first CCA addition cycle, nucleotide-binding to the active site triggers a clockwise screw motion, producing torque on the RNA. This ejects stable RNAs, whereas unstable RNAs are refolded while bound to the enzyme and subjected to a second CCA catalytic cycle. This chain is CCA-adding enzyme, found in Archaeoglobus fulgidus (strain ATCC 49558 / DSM 4304 / JCM 9628 / NBRC 100126 / VC-16).